A 172-amino-acid chain; its full sequence is Acetolactate synthase small subunit (172 aa).

The ACT domain occupies 4-79 (IITLTVVNRS…DVLKVTDITN (76 aa)).

This sequence belongs to the acetolactate synthase small subunit family. In terms of assembly, dimer of large and small chains.

It catalyses the reaction 2 pyruvate + H(+) = (2S)-2-acetolactate + CO2. It participates in amino-acid biosynthesis; L-isoleucine biosynthesis; L-isoleucine from 2-oxobutanoate: step 1/4. Its pathway is amino-acid biosynthesis; L-valine biosynthesis; L-valine from pyruvate: step 1/4. In Bacillus subtilis (strain 168), this protein is Acetolactate synthase small subunit (ilvH).